Here is a 240-residue protein sequence, read N- to C-terminus: Phosphoribosylaminoimidazole-succinocarboxamide synthase (240 aa).

It belongs to the SAICAR synthetase family.

The enzyme catalyses 5-amino-1-(5-phospho-D-ribosyl)imidazole-4-carboxylate + L-aspartate + ATP = (2S)-2-[5-amino-1-(5-phospho-beta-D-ribosyl)imidazole-4-carboxamido]succinate + ADP + phosphate + 2 H(+). The protein operates within purine metabolism; IMP biosynthesis via de novo pathway; 5-amino-1-(5-phospho-D-ribosyl)imidazole-4-carboxamide from 5-amino-1-(5-phospho-D-ribosyl)imidazole-4-carboxylate: step 1/2. The protein is Phosphoribosylaminoimidazole-succinocarboxamide synthase of Wolbachia pipientis wMel.